Here is an 86-residue protein sequence, read N- to C-terminus: Small ribosomal subunit protein bS20 (86 aa).

Positions 1-27 (MANSKSAKKRATQAERRRQHNASRRSM) are enriched in basic residues. Residues 1–28 (MANSKSAKKRATQAERRRQHNASRRSMM) are disordered.

Belongs to the bacterial ribosomal protein bS20 family.

Binds directly to 16S ribosomal RNA. This is Small ribosomal subunit protein bS20 from Aliivibrio salmonicida (strain LFI1238) (Vibrio salmonicida (strain LFI1238)).